A 428-amino-acid chain; its full sequence is Elongation factor 1-alpha (428 aa).

A tr-type G domain is found at 5–225; sequence KPILNVAFIG…DAFQPPEKPT (221 aa). The interval 14 to 21 is G1; that stretch reads GHVDAGKS. 14–21 is a GTP binding site; sequence GHVDAGKS. Position 21 (S21) interacts with Mg(2+). Residues 70–74 form a G2 region; sequence GVTID. The G3 stretch occupies residues 91-94; that stretch reads DCPG. GTP is bound by residues 91-95 and 149-152; these read DCPGH and NKMD. The tract at residues 149–152 is G4; it reads NKMD. Residues 189-191 are G5; that stretch reads ASL.

Belongs to the TRAFAC class translation factor GTPase superfamily. Classic translation factor GTPase family. EF-Tu/EF-1A subfamily.

It localises to the cytoplasm. The enzyme catalyses GTP + H2O = GDP + phosphate + H(+). GTP hydrolase that promotes the GTP-dependent binding of aminoacyl-tRNA to the A-site of ribosomes during protein biosynthesis. This Methanococcus maripaludis (strain C7 / ATCC BAA-1331) protein is Elongation factor 1-alpha.